The primary structure comprises 341 residues: HTH-type transcriptional repressor PurR (341 aa).

The region spanning A2–V56 is the HTH lacI-type domain. Positions I4–N23 form a DNA-binding region, H-T-H motif. A DNA-binding region spans residues S48–V56. Positions 73, 190, 192, 221, and 275 each coordinate hypoxanthine.

In terms of assembly, homodimer.

Its pathway is purine metabolism; purine nucleotide biosynthesis [regulation]. Its function is as follows. Is the main repressor of the genes involved in the de novo synthesis of purine nucleotides, regulating purB, purC, purEK, purF, purHD, purL, purMN and guaBA expression. In addition, it participates in the regulation or coregulation of genes involved in de novo pyrimidine nucleotide biosynthesis, salvage and uptake (pyrC, pyrD, carAB and codBA), and of several genes encoding enzymes necessary for nucleotide and polyamine biosynthesis (prsA, glyA, gcvTHP, speA, glnB). Binds to a 16-bp palindromic sequence located within the promoter region of pur regulon genes. The consensus binding sequence is 5'-ACGCAAACGTTTTCNT-3'. PurR is allosterically activated to bind its cognate DNA by binding the purine corepressors, hypoxanthine or guanine, thereby effecting transcription repression. This Escherichia coli (strain K12) protein is HTH-type transcriptional repressor PurR (purR).